A 174-amino-acid polypeptide reads, in one-letter code: Crossover junction endodeoxyribonuclease RuvC (174 aa).

Residues Asp8, Glu67, and Asp139 contribute to the active site. 3 residues coordinate Mg(2+): Asp8, Glu67, and Asp139.

This sequence belongs to the RuvC family. In terms of assembly, homodimer which binds Holliday junction (HJ) DNA. The HJ becomes 2-fold symmetrical on binding to RuvC with unstacked arms; it has a different conformation from HJ DNA in complex with RuvA. In the full resolvosome a probable DNA-RuvA(4)-RuvB(12)-RuvC(2) complex forms which resolves the HJ. Requires Mg(2+) as cofactor.

The protein localises to the cytoplasm. The enzyme catalyses Endonucleolytic cleavage at a junction such as a reciprocal single-stranded crossover between two homologous DNA duplexes (Holliday junction).. The RuvA-RuvB-RuvC complex processes Holliday junction (HJ) DNA during genetic recombination and DNA repair. Endonuclease that resolves HJ intermediates. Cleaves cruciform DNA by making single-stranded nicks across the HJ at symmetrical positions within the homologous arms, yielding a 5'-phosphate and a 3'-hydroxyl group; requires a central core of homology in the junction. The consensus cleavage sequence is 5'-(A/T)TT(C/G)-3'. Cleavage occurs on the 3'-side of the TT dinucleotide at the point of strand exchange. HJ branch migration catalyzed by RuvA-RuvB allows RuvC to scan DNA until it finds its consensus sequence, where it cleaves and resolves the cruciform DNA. The polypeptide is Crossover junction endodeoxyribonuclease RuvC (Pseudomonas fluorescens (strain SBW25)).